We begin with the raw amino-acid sequence, 100 residues long: uncharacterized protein (100 aa).

A run of 3 helical transmembrane segments spans residues 7–28 (TLIGLIVGLLFGLSGIATLLSL), 38–60 (AQLSQLGVASTLVMLVIALILII), and 65–87 (LSALIVGAVIGAVLNLVLQANGV).

The protein resides in the cell membrane. This is an uncharacterized protein from Archaeoglobus fulgidus (strain ATCC 49558 / DSM 4304 / JCM 9628 / NBRC 100126 / VC-16).